Reading from the N-terminus, the 246-residue chain is tRNA (guanine-N(1)-)-methyltransferase (246 aa).

S-adenosyl-L-methionine is bound by residues G113 and 133 to 138; that span reads IGDYVL.

It belongs to the RNA methyltransferase TrmD family. As to quaternary structure, homodimer.

The protein localises to the cytoplasm. It catalyses the reaction guanosine(37) in tRNA + S-adenosyl-L-methionine = N(1)-methylguanosine(37) in tRNA + S-adenosyl-L-homocysteine + H(+). Functionally, specifically methylates guanosine-37 in various tRNAs. The chain is tRNA (guanine-N(1)-)-methyltransferase from Haemophilus influenzae (strain 86-028NP).